An 870-amino-acid polypeptide reads, in one-letter code: NEDD4-like E3 ubiquitin-protein ligase WWP2 (870 aa).

A C2 domain is found at 1-117; that stretch reads MASASSSRAG…KNNGGKMENM (117 aa). Residues 151-299 form a disordered region; sequence VPNGSALTDG…QQLPAAAQAP (149 aa). Composition is skewed to polar residues over residues 152–171 and 200–210; these read PNGSALTDGSQLPSRDSSGT and SARTTPATGEQ. S211 carries the phosphoserine modification. 2 stretches are compositionally biased toward polar residues: residues 222-243 and 263-272; these read VKNSGHSGLANGTVNDEPTTAT and VTPNPNTTSL. Residues 290–299 show a composition bias toward low complexity; it reads QQLPAAAQAP. WW domains follow at residues 300–333, 330–363, 405–437, and 444–477; these read DALPAGWEQRELPNGRVYYVDHNTKTTTWERPLP, RPLPPGWEKRTDPRGRFYYVDHNTRTTTWQRPTA, GPLPPGWEKRQDNGRVYYVNHNTRTTQWEDPRT, and PALPPGWEMKYTSEGVRYFVDHNTRTTTFKDPRP. Positions 536–870 constitute an HECT domain; sequence KPYDLRRRLY…IEETEGFGQE (335 aa). C838 acts as the Glycyl thioester intermediate in catalysis.

As to quaternary structure, interacts with POU5F1, RBP1, EGR2 and SLC11A2. Interacts with SCNN1A, SCNN1B, SCNN1G, WBP1, WBP2 and ATN1. Interacts with ERBB4, NDFIP1 and NDFIP2. Interacts with ARRDC4. Interacts (via WW domains) with ARRDC1 (via PPxY motifs); ubiquitinates ARRDC1. Interacts (via WW domains) with ARRDC2 and ARRDC3. (Microbial infection) Interacts with adenovirus type 2 PIII. In terms of processing, autoubiquitinated. Ubiquitinated by the SCF(FBXL15) complex, leading to its degradation by the proteasome. Detected in heart, throughout the brain, placenta, lung, liver, muscle, kidney and pancreas. Also detected in spleen and peripheral blood leukocytes.

It is found in the nucleus. The enzyme catalyses S-ubiquitinyl-[E2 ubiquitin-conjugating enzyme]-L-cysteine + [acceptor protein]-L-lysine = [E2 ubiquitin-conjugating enzyme]-L-cysteine + N(6)-ubiquitinyl-[acceptor protein]-L-lysine.. Its pathway is protein modification; protein ubiquitination. Activated by NDFIP1- and NDFIP2-binding. E3 ubiquitin-protein ligase which accepts ubiquitin from an E2 ubiquitin-conjugating enzyme in the form of a thioester and then directly transfers the ubiquitin to targeted substrates. Polyubiquitinates POU5F1 by 'Lys-63'-linked conjugation and promotes it to proteasomal degradation; in embryonic stem cells (ESCs) the ubiquitination is proposed to regulate POU5F1 protein level. Ubiquitinates EGR2 and promotes it to proteasomal degradation; in T-cells the ubiquitination inhibits activation-induced cell death. Ubiquitinates SLC11A2; the ubiquitination is enhanced by presence of NDFIP1 and NDFIP2. Ubiquitinates RPB1 and promotes it to proteasomal degradation. This Homo sapiens (Human) protein is NEDD4-like E3 ubiquitin-protein ligase WWP2 (WWP2).